The chain runs to 586 residues: Inner membrane protein YejM (586 aa).

The Cytoplasmic portion of the chain corresponds to 1 to 20; it reads MVTHRQRYREKVSQMVSWGH. Residues 21 to 43 traverse the membrane as a helical segment; sequence WFALFNILLSLVIGSRYLFIADW. Residues 44–57 lie on the Periplasmic side of the membrane; the sequence is PTTLAGRIYSYVSI. A helical membrane pass occupies residues 58-80; sequence IGHFSFLVFATYLLILFPLTFIV. Residues 81-84 are Cytoplasmic-facing; that stretch reads GSQR. A helical membrane pass occupies residues 85–103; the sequence is LMRFLSVILATAGMTLLLI. Residues 104 to 134 lie on the Periplasmic side of the membrane; sequence DSEVFTRFHLHLNPIVWQLVINPDENEMARD. The chain crosses the membrane as a helical span at residues 135 to 157; the sequence is WQLMFISVPVILLLELVFATWSW. Residues 158-168 are Cytoplasmic-facing; it reads QKLRSLTRRRR. A helical transmembrane segment spans residues 169-191; the sequence is FARPLAAFLFIAFIASHVVYIWA. The Periplasmic portion of the chain corresponds to 192–586; sequence DANFYRPITM…LTDEKRFIAN (395 aa).

To H.influenzae HI_0842.

Its subcellular location is the cell inner membrane. This Escherichia coli O157:H7 protein is Inner membrane protein YejM (yejM).